The sequence spans 145 residues: 6-pyruvoyl tetrahydrobiopterin synthase (145 aa).

At serine 19 the chain carries Phosphoserine; by PKG. Zn(2+) is bound at residue histidine 24. The residue at position 28 (serine 28) is a Phosphoserine. Cysteine 43 functions as the Proton acceptor in the catalytic mechanism. Zn(2+) is bound by residues histidine 49 and histidine 51. Histidine 90 serves as the catalytic Charge relay system. A Phosphotyrosine modification is found at tyrosine 128. Glutamate 134 acts as the Charge relay system in catalysis.

The protein belongs to the PTPS family. As to quaternary structure, homohexamer formed of two homotrimers in a head to head fashion. The cofactor is Zn(2+). Phosphorylation of Ser-19 is required for maximal enzyme activity.

It carries out the reaction 7,8-dihydroneopterin 3'-triphosphate = 6-pyruvoyl-5,6,7,8-tetrahydropterin + triphosphate + H(+). The protein operates within cofactor biosynthesis; tetrahydrobiopterin biosynthesis; tetrahydrobiopterin from 7,8-dihydroneopterin triphosphate: step 1/3. In terms of biological role, involved in the biosynthesis of tetrahydrobiopterin, an essential cofactor of aromatic amino acid hydroxylases. Catalyzes the transformation of 7,8-dihydroneopterin triphosphate into 6-pyruvoyl tetrahydropterin. This chain is 6-pyruvoyl tetrahydrobiopterin synthase (PTS), found in Homo sapiens (Human).